The chain runs to 563 residues: Arginine--tRNA ligase (563 aa).

A 'HIGH' region motif is present at residues 121–131; it reads PNIAKPFSIGH.

This sequence belongs to the class-I aminoacyl-tRNA synthetase family. As to quaternary structure, monomer.

The protein resides in the cytoplasm. It catalyses the reaction tRNA(Arg) + L-arginine + ATP = L-arginyl-tRNA(Arg) + AMP + diphosphate. The protein is Arginine--tRNA ligase of Streptococcus pyogenes serotype M18 (strain MGAS8232).